Here is a 406-residue protein sequence, read N- to C-terminus: Tyrosine--tRNA ligase (406 aa).

An L-tyrosine-binding site is contributed by Tyr-35. Residues 40–49 (ATSTSLHIGH) carry the 'HIGH' region motif. The L-tyrosine site is built by Tyr-166 and Gln-170. The short motif at 226 to 230 (KMGKS) is the 'KMSKS' region element. Lys-229 is an ATP binding site. The S4 RNA-binding domain occupies 341–405 (ILLVDLMVSS…IGKKKILRII (65 aa)).

This sequence belongs to the class-I aminoacyl-tRNA synthetase family. TyrS type 1 subfamily. In terms of assembly, homodimer.

Its subcellular location is the cytoplasm. It catalyses the reaction tRNA(Tyr) + L-tyrosine + ATP = L-tyrosyl-tRNA(Tyr) + AMP + diphosphate + H(+). Functionally, catalyzes the attachment of tyrosine to tRNA(Tyr) in a two-step reaction: tyrosine is first activated by ATP to form Tyr-AMP and then transferred to the acceptor end of tRNA(Tyr). This chain is Tyrosine--tRNA ligase, found in Borrelia hermsii (strain HS1 / DAH).